The primary structure comprises 348 residues: Sec-independent protein translocase protein TatC (348 aa).

Transmembrane regions (helical) follow at residues 7-27, 162-182, 192-212, 244-264, 278-298, and 299-319; these read LCLT…MDIL, VVIS…PGLL, CMAV…FIVL, MILM…FVKL, YAIV…DVAT, and MMLM…LAWM.

Belongs to the TatC family. Forms a complex with TatA.

It localises to the cell membrane. Functionally, part of the twin-arginine translocation (Tat) system that transports large folded proteins containing a characteristic twin-arginine motif in their signal peptide across membranes. The protein is Sec-independent protein translocase protein TatC of Akkermansia muciniphila (strain ATCC BAA-835 / DSM 22959 / JCM 33894 / BCRC 81048 / CCUG 64013 / CIP 107961 / Muc).